The following is a 319-amino-acid chain: 33 kDa chaperonin (319 aa).

2 disulfides stabilise this stretch: Cys-239–Cys-241 and Cys-272–Cys-275. The segment at 300-319 is disordered; that stretch reads EVSEEMKKAEEKEKEEKNKK.

The protein belongs to the HSP33 family. Under oxidizing conditions two disulfide bonds are formed involving the reactive cysteines. Under reducing conditions zinc is bound to the reactive cysteines and the protein is inactive.

The protein resides in the cytoplasm. Its function is as follows. Redox regulated molecular chaperone. Protects both thermally unfolding and oxidatively damaged proteins from irreversible aggregation. Plays an important role in the bacterial defense system toward oxidative stress. The chain is 33 kDa chaperonin from Clostridium perfringens (strain ATCC 13124 / DSM 756 / JCM 1290 / NCIMB 6125 / NCTC 8237 / Type A).